We begin with the raw amino-acid sequence, 120 residues long: Large ribosomal subunit protein uL22 (120 aa).

The protein belongs to the universal ribosomal protein uL22 family. Part of the 50S ribosomal subunit.

Its function is as follows. This protein binds specifically to 23S rRNA; its binding is stimulated by other ribosomal proteins, e.g. L4, L17, and L20. It is important during the early stages of 50S assembly. It makes multiple contacts with different domains of the 23S rRNA in the assembled 50S subunit and ribosome. The globular domain of the protein is located near the polypeptide exit tunnel on the outside of the subunit, while an extended beta-hairpin is found that lines the wall of the exit tunnel in the center of the 70S ribosome. In Corynebacterium urealyticum (strain ATCC 43042 / DSM 7109), this protein is Large ribosomal subunit protein uL22.